The sequence spans 410 residues: Dihydrolipoyllysine-residue acetyltransferase component of pyruvate dehydrogenase complex (410 aa).

Residues 1–69 enclose the Lipoyl-binding domain; the sequence is MPDIGTDLVE…TTGSLIAILN (69 aa). Residue Lys35 is modified to N6-lipoyllysine. The disordered stretch occupies residues 81 to 100; the sequence is SSSYSFKNSKNTSTNSNLGN. In terms of domain architecture, Peripheral subunit-binding (PSBD) spans 113–150; it reads HATPTVRRLARKFDIKLENITGTGRKGRILKEDVISYK. Residue His383 is part of the active site.

The protein belongs to the 2-oxoacid dehydrogenase family. As to quaternary structure, forms a 24-polypeptide structural core with octahedral symmetry. (R)-lipoate is required as a cofactor.

The catalysed reaction is N(6)-[(R)-dihydrolipoyl]-L-lysyl-[protein] + acetyl-CoA = N(6)-[(R)-S(8)-acetyldihydrolipoyl]-L-lysyl-[protein] + CoA. The pyruvate dehydrogenase complex catalyzes the overall conversion of pyruvate to acetyl-CoA and CO(2). It contains multiple copies of three enzymatic components: pyruvate dehydrogenase (E1), dihydrolipoamide acetyltransferase (E2) and lipoamide dehydrogenase (E3). The protein is Dihydrolipoyllysine-residue acetyltransferase component of pyruvate dehydrogenase complex (aceF) of Buchnera aphidicola subsp. Baizongia pistaciae (strain Bp).